Reading from the N-terminus, the 211-residue chain is MASGQGPGPPRQECGEPALPSASEEQVAQDTEEVFRSYVFYRHQQEQEAEGVAAPADPEMVTLPLQPSSTMGQVGRQLAIIGDDINRRYDSEFQTMLQHLQPTAENAYEYFTKIATSLFESGINWGRVVALLGFGYRLALHVYQHGLTGFLGQVTRFVVDFMLHHCIARWIAQRGGWVAALNLGNGPILNVLVVLGVVLLGQFVVRRFFKS.

Residues 1-28 (MASGQGPGPPRQECGEPALPSASEEQVA) are disordered. Ala-2 carries the post-translational modification N-acetylalanine. Residues 74-88 (VGRQLAIIGDDINRR) carry the BH3 motif. The BH1 motif lies at 117-136 (SLFESGINWGRVVALLGFGY). Residues Asp-160 and His-164 each contribute to the Zn(2+) site. The BH2 motif lies at 169-184 (RWIAQRGGWVAALNLG). The chain crosses the membrane as a helical span at residues 188-205 (ILNVLVVLGVVLLGQFVV).

This sequence belongs to the Bcl-2 family. Homodimer. Formation of the homodimer is zinc-dependent. Forms heterodimers with BCL2 and BCL2L1 isoform Bcl-X(L). Forms heterooligomers with BAX. Interacts with BCL2A1. Interacts with RTL10/BOP. Interacts with VDAC1. Interacts with GIMAP3/IAN4 and GIMAP5/IAN5. As to quaternary structure, (Microbial infection) Interacts with vaccinia virus protein F1. In terms of assembly, (Microbial infection) Interacts with myxoma virus protein M11L. (Microbial infection) Interacts with Epstein-Barr virus protein BALF1. As to quaternary structure, (Microbial infection) Interacts with adenovirus protein E1B 19K. As to expression, expressed in a wide variety of tissues, with highest levels in the heart and skeletal muscle.

The protein localises to the mitochondrion outer membrane. Its function is as follows. Plays a role in the mitochondrial apoptotic process. Upon arrival of cell death signals, promotes mitochondrial outer membrane (MOM) permeabilization by oligomerizing to form pores within the MOM. This releases apoptogenic factors into the cytosol, including cytochrome c, promoting the activation of caspase 9 which in turn processes and activates the effector caspases. This is Bcl-2 homologous antagonist/killer (BAK1) from Homo sapiens (Human).